The sequence spans 126 residues: Small ribosomal subunit protein uS12 (126 aa).

Asp-89 bears the 3-methylthioaspartic acid mark. Positions 106–126 (GVRERRRSRSKYGAKMPRSAA) are disordered.

The protein belongs to the universal ribosomal protein uS12 family. Part of the 30S ribosomal subunit. Contacts proteins S8 and S17. May interact with IF1 in the 30S initiation complex.

Its function is as follows. With S4 and S5 plays an important role in translational accuracy. Interacts with and stabilizes bases of the 16S rRNA that are involved in tRNA selection in the A site and with the mRNA backbone. Located at the interface of the 30S and 50S subunits, it traverses the body of the 30S subunit contacting proteins on the other side and probably holding the rRNA structure together. The combined cluster of proteins S8, S12 and S17 appears to hold together the shoulder and platform of the 30S subunit. In Tremblaya princeps, this protein is Small ribosomal subunit protein uS12.